Consider the following 226-residue polypeptide: MQIRFLGQSAFLLTSGVHQLLIDPFIAGNPKSPVTLEEALGWKVDAVLISHAHGDHWGNALDFGRAGVPVIGTAEIGGYAQKNGAQNAIGMNIGGTYRAPWGSVTLTPAWHSSSFPDGTYGGMPTGLIIEMDGVRVYHAGDTNLFSDMRLIGDRGLDVALLPIGDHYTMGPEEAARTLELLRPRVAIPMHYGTFPVLTGDPQVFAREGRARGVDVRVLAPGETAEV.

It belongs to the UPF0173 family.

This Deinococcus geothermalis (strain DSM 11300 / CIP 105573 / AG-3a) protein is UPF0173 metal-dependent hydrolase Dgeo_0136.